A 248-amino-acid polypeptide reads, in one-letter code: ATP synthase subunit a, chloroplastic (248 aa).

5 helical membrane-spanning segments follow: residues glycine 35–glycine 55, valine 94–isoleucine 114, isoleucine 133–serine 153, valine 202–alanine 222, and serine 224–glycine 244.

It belongs to the ATPase A chain family. In terms of assembly, F-type ATPases have 2 components, CF(1) - the catalytic core - and CF(0) - the membrane proton channel. CF(1) has five subunits: alpha(3), beta(3), gamma(1), delta(1), epsilon(1). CF(0) has four main subunits: a, b, b' and c.

It is found in the plastid. Its subcellular location is the chloroplast thylakoid membrane. In terms of biological role, key component of the proton channel; it plays a direct role in the translocation of protons across the membrane. This Pyropia yezoensis (Susabi-nori) protein is ATP synthase subunit a, chloroplastic.